Reading from the N-terminus, the 590-residue chain is Aspartate--tRNA(Asp/Asn) ligase (590 aa).

Residue Glu173 participates in L-aspartate binding. The tract at residues 197 to 200 is aspartate; it reads QIFK. Arg219 contacts L-aspartate. ATP-binding positions include 219-221 and Gln228; that span reads RDE. His450 serves as a coordination point for L-aspartate. Glu484 lines the ATP pocket. Residue Arg491 coordinates L-aspartate. 536–539 serves as a coordination point for ATP; sequence GLDR.

This sequence belongs to the class-II aminoacyl-tRNA synthetase family. Type 1 subfamily. As to quaternary structure, homodimer.

It is found in the cytoplasm. It catalyses the reaction tRNA(Asx) + L-aspartate + ATP = L-aspartyl-tRNA(Asx) + AMP + diphosphate. Its function is as follows. Aspartyl-tRNA synthetase with relaxed tRNA specificity since it is able to aspartylate not only its cognate tRNA(Asp) but also tRNA(Asn). Reaction proceeds in two steps: L-aspartate is first activated by ATP to form Asp-AMP and then transferred to the acceptor end of tRNA(Asp/Asn). This Coxiella burnetii (strain RSA 331 / Henzerling II) protein is Aspartate--tRNA(Asp/Asn) ligase.